The chain runs to 382 residues: O-antigen polymerase (382 aa).

Residues 1–3 are Cytoplasmic-facing; the sequence is MNN. Residues 4–22 form a helical membrane-spanning segment; that stretch reads INKIFITFLCIELIIGGGG. At 23-34 the chain is on the periplasmic side; that stretch reads RLLEPLGIFPLR. The helical transmembrane segment at 35–54 threads the bilayer; that stretch reads YLLFVFSFILLIFNLVTFNF. The Cytoplasmic portion of the chain corresponds to 55-62; sequence SITQKCVS. The chain crosses the membrane as a helical span at residues 63–81; sequence LFIWLLLFPFYGFFVGLLA. The Periplasmic portion of the chain corresponds to 82–94; sequence GNKINDILFDVQP. A helical membrane pass occupies residues 95–112; the sequence is YLFMLSLIYLFTLRYTLK. Residues 113 to 125 are Cytoplasmic-facing; the sequence is VFSCEIFIKIVNA. The helical transmembrane segment at 126–146 threads the bilayer; the sequence is FALYGSLLYISYIILLNFGLL. At 147 to 167 the chain is on the periplasmic side; the sequence is NFNLIYEHLSLTSEFFFRPDG. A helical membrane pass occupies residues 168–187; it reads AFFSKSFYFFGVGAIISFVD. The Cytoplasmic segment spans residues 188 to 189; it reads KK. Residues 190–206 traverse the membrane as a helical segment; that stretch reads YLKCLIIVLAILLTESR. The Periplasmic portion of the chain corresponds to 207-208; sequence GV. Residues 209–226 traverse the membrane as a helical segment; the sequence is LLFTTLSLLLASFKLHKL. The Cytoplasmic portion of the chain corresponds to 227–229; it reads YLN. The helical transmembrane segment at 230–247 threads the bilayer; sequence TIIIILGSVLFIIMLYMV. The Periplasmic portion of the chain corresponds to 248–300; sequence GSRSEDSDSVRFNDLYFYYKNVDLATFLFGRGFGSFILDRLRIEIVPLEILQK. The helical transmembrane segment at 301–318 threads the bilayer; the sequence is TGVIGVFISLVPMLLIFL. Topologically, residues 319–329 are cytoplasmic; it reads KGYFLNSTKTS. Residues 330-349 traverse the membrane as a helical segment; that stretch reads LMMSLILFFSITVSITNPFL. The Periplasmic portion of the chain corresponds to 350-352; sequence FTP. A helical transmembrane segment spans residues 353–370; it reads MGIFIIGVVVLWVFSIEN. Over 371–382 the chain is Cytoplasmic; sequence IQISNNLTSGAK.

It localises to the cell inner membrane. The enzyme catalyses n lipid-linked O-antigen repeat units = a lipid-linked O antigen + (n-1) polyisoprenyl diphosphate.. It participates in bacterial outer membrane biogenesis; LPS O-antigen biosynthesis. Functionally, polymerase involved in the biosynthesis of the lipopolysaccharide (LPS). Catalyzes the polymerization of the O-antigen repeat units on the periplasmic face of the inner membrane, leading to the formation of the lipid-linked O-antigen molecule. The protein is O-antigen polymerase of Shigella flexneri.